The sequence spans 324 residues: Beta-ketoacyl-[acyl-carrier-protein] synthase III (324 aa).

Active-site residues include C112 and H250. The ACP-binding stretch occupies residues 251-255; the sequence is QANIR. Residue N280 is part of the active site.

Belongs to the thiolase-like superfamily. FabH family. In terms of assembly, homodimer.

The protein localises to the cytoplasm. It catalyses the reaction malonyl-[ACP] + acetyl-CoA + H(+) = 3-oxobutanoyl-[ACP] + CO2 + CoA. Its pathway is lipid metabolism; fatty acid biosynthesis. Its function is as follows. Catalyzes the condensation reaction of fatty acid synthesis by the addition to an acyl acceptor of two carbons from malonyl-ACP. Catalyzes the first condensation reaction which initiates fatty acid synthesis and may therefore play a role in governing the total rate of fatty acid production. Possesses both acetoacetyl-ACP synthase and acetyl transacylase activities. Its substrate specificity determines the biosynthesis of branched-chain and/or straight-chain of fatty acids. The protein is Beta-ketoacyl-[acyl-carrier-protein] synthase III of Clostridium novyi (strain NT).